The chain runs to 443 residues: Oxygen-dependent coproporphyrinogen-III oxidase, mitochondrial (443 aa).

The transit peptide at 1–98 directs the protein to the mitochondrion; sequence MALRLGRLGS…EMVPKSSGAR (98 aa). The segment at 89-112 is disordered; sequence EMVPKSSGARSPSPGRREEDGDEL. Ser-101 bears the Phosphoserine mark. Residues 103–112 are compositionally biased toward basic and acidic residues; the sequence is GRREEDGDEL. Residues 182-191 form an important for dimerization region; it reads VLQDGRVFEK. Position 233 (Ser-233) interacts with coproporphyrinogen III. His-247 serves as the catalytic Proton donor. 249 to 251 is a binding site for coproporphyrinogen III; it reads NYR. The important for dimerization stretch occupies residues 381-417; it reads YVEFNLLYDRGTKFGLFTPGSRIESILMSLPLTARWE. N6-acetyllysine; alternate is present on Lys-393. An N6-succinyllysine; alternate modification is found at Lys-393. 400-402 contacts coproporphyrinogen III; it reads GSR.

Belongs to the aerobic coproporphyrinogen-III oxidase family. Homodimer. Expressed in erythroid cells. Expressed in liver.

Its subcellular location is the mitochondrion intermembrane space. The enzyme catalyses coproporphyrinogen III + O2 + 2 H(+) = protoporphyrinogen IX + 2 CO2 + 2 H2O. It participates in porphyrin-containing compound metabolism; protoporphyrin-IX biosynthesis; protoporphyrinogen-IX from coproporphyrinogen-III (O2 route): step 1/1. Functionally, involved in the heme biosynthesis. Catalyzes the aerobic oxidative decarboxylation of propionate groups of rings A and B of coproporphyrinogen-III to yield the vinyl groups in protoporphyrinogen-IX. In Mus musculus (Mouse), this protein is Oxygen-dependent coproporphyrinogen-III oxidase, mitochondrial (Cpox).